The sequence spans 245 residues: MIPQRILMKFFDFHIQGRDHDSSLRLLLEASRLGYQGGVLVYPSERYPDLKSDLESLRENPELQDFEIARGVMINASDPRDMRRSVNKFRKKADVIYVSGGNLKVNRAACESRRVDVLSAPYTSRRDPGINHVLAREAARNNVAVELPLADVIGSWLKVRARVLEQFREILKLHRKFGFPLLLTSRASSIYDLRTPGDIMNLAECFGMESSEAEESLTSTPASILEDSGNRHLLIAEGVRLLPES.

This sequence belongs to the eukaryotic/archaeal RNase P protein component 3 family. In terms of assembly, consists of a catalytic RNA component and at least 4-5 protein subunits.

It localises to the cytoplasm. It carries out the reaction Endonucleolytic cleavage of RNA, removing 5'-extranucleotides from tRNA precursor.. Part of ribonuclease P, a protein complex that generates mature tRNA molecules by cleaving their 5'-ends. The sequence is that of Ribonuclease P protein component 3 from Methanothermobacter thermautotrophicus (strain ATCC 29096 / DSM 1053 / JCM 10044 / NBRC 100330 / Delta H) (Methanobacterium thermoautotrophicum).